The following is a 559-amino-acid chain: Formate--tetrahydrofolate ligase (559 aa).

Position 67 to 74 (67 to 74) interacts with ATP; it reads TPAGEGKS.

Belongs to the formate--tetrahydrofolate ligase family.

The enzyme catalyses (6S)-5,6,7,8-tetrahydrofolate + formate + ATP = (6R)-10-formyltetrahydrofolate + ADP + phosphate. The protein operates within one-carbon metabolism; tetrahydrofolate interconversion. The polypeptide is Formate--tetrahydrofolate ligase (Lactobacillus delbrueckii subsp. bulgaricus (strain ATCC BAA-365 / Lb-18)).